Reading from the N-terminus, the 659-residue chain is Exoribonuclease 2 (659 aa).

Residues arginine 189–alanine 532 form the RNB domain. The S1 motif domain maps to asparagine 577–valine 659.

The protein belongs to the RNR ribonuclease family. RNase II subfamily.

It localises to the cytoplasm. It carries out the reaction Exonucleolytic cleavage in the 3'- to 5'-direction to yield nucleoside 5'-phosphates.. Functionally, involved in mRNA degradation. Hydrolyzes single-stranded polyribonucleotides processively in the 3' to 5' direction. The chain is Exoribonuclease 2 from Mannheimia succiniciproducens (strain KCTC 0769BP / MBEL55E).